The following is a 76-amino-acid chain: Adropin (76 aa).

The first 33 residues, 1–33 (MGAAISQGALIAIVCNGLVGFLLLLLWVILCWA), serve as a signal peptide directing secretion. Positions 41 to 76 (VDSLSESSPNSSPGPCPEKAPPPQKPSHEGSYLLQP) are disordered. The span at 52-65 (SPGPCPEKAPPPQK) shows a compositional bias: pro residues.

Expressed in liver and brain.

The protein localises to the secreted. In terms of biological role, involved in the regulation of glucose homeostasis and lipid metabolism. The chain is Adropin (ENHO) from Homo sapiens (Human).